The chain runs to 229 residues: 5'-methylthioadenosine/S-adenosylhomocysteine nucleosidase (229 aa).

E12 (proton acceptor) is an active-site residue. Substrate contacts are provided by residues G78, I152, and 173-174 (ME). Catalysis depends on D197, which acts as the Proton donor.

Belongs to the PNP/UDP phosphorylase family. MtnN subfamily.

The catalysed reaction is S-adenosyl-L-homocysteine + H2O = S-(5-deoxy-D-ribos-5-yl)-L-homocysteine + adenine. The enzyme catalyses S-methyl-5'-thioadenosine + H2O = 5-(methylsulfanyl)-D-ribose + adenine. It catalyses the reaction 5'-deoxyadenosine + H2O = 5-deoxy-D-ribose + adenine. It participates in amino-acid biosynthesis; L-methionine biosynthesis via salvage pathway; S-methyl-5-thio-alpha-D-ribose 1-phosphate from S-methyl-5'-thioadenosine (hydrolase route): step 1/2. Its function is as follows. Catalyzes the irreversible cleavage of the glycosidic bond in both 5'-methylthioadenosine (MTA) and S-adenosylhomocysteine (SAH/AdoHcy) to adenine and the corresponding thioribose, 5'-methylthioribose and S-ribosylhomocysteine, respectively. Also cleaves 5'-deoxyadenosine, a toxic by-product of radical S-adenosylmethionine (SAM) enzymes, into 5-deoxyribose and adenine. This Haemophilus influenzae (strain PittEE) protein is 5'-methylthioadenosine/S-adenosylhomocysteine nucleosidase.